The chain runs to 466 residues: Ceramide glucosyltransferase 1 (466 aa).

A helical transmembrane segment spans residues 70-90 (LALSGCIFVSVLYLVHIIAFF). Residue aspartate 148 is a short sequence motif, D1. Residue aspartate 200 is a short sequence motif, D2. Aspartate 294 is a short sequence motif (D3). Aspartate 294 (proton acceptor) is an active-site residue. Positions 330-334 (RIGRW) match the (Q/R)XXRW motif. A run of 2 helical transmembrane segments spans residues 354-374 (CVTSGLIMAFGLNYLGGYSVY) and 403-423 (TPFLFVFIWLFREFTSPFIFI).

This sequence belongs to the glycosyltransferase 2 family. Expressed in excretory canals, pharyngeal intestinal valve, intestine and intestinal rectal valve.

It localises to the membrane. The catalysed reaction is an N-acylsphing-4-enine + UDP-alpha-D-glucose = a beta-D-glucosyl-(1&lt;-&gt;1')-N-acylsphing-4-enine + UDP + H(+). It carries out the reaction an N-acyl-15-methylhexadecasphing-4-enine + UDP-alpha-D-glucose = an N-acyl-1-beta-D-glucosyl-15-methylhexadecasphing-4-enine + UDP + H(+). It functions in the pathway lipid metabolism; sphingolipid metabolism. In terms of biological role, catalyzes the first glycosylation step in glycosphingolipid biosynthesis, the transfer of glucose to ceramide to produce glucosylceramides (GlcCer). GlcCer are known to contribute to the physical properties and physiological functions of membranes and may regulate signal transduction. Only branched-chain sphingoid bases like 15-methylhexadecasphing-4-enine are used for generating complex sphingolipids in Caenorhabditis elegans. Together with cgt-3, plays a role in the trafficking of proteins such as mig-14 to the cell membrane in intestinal cells. The protein is Ceramide glucosyltransferase 1 of Caenorhabditis elegans.